The chain runs to 101 residues: Small ribosomal subunit protein uS14 (101 aa).

Belongs to the universal ribosomal protein uS14 family. Part of the 30S ribosomal subunit. Contacts proteins S3 and S10.

Functionally, binds 16S rRNA, required for the assembly of 30S particles and may also be responsible for determining the conformation of the 16S rRNA at the A site. In Shewanella loihica (strain ATCC BAA-1088 / PV-4), this protein is Small ribosomal subunit protein uS14.